Here is a 335-residue protein sequence, read N- to C-terminus: Hsp90 co-chaperone Cdc37-like 1 (335 aa).

Residues M1–W11 are compositionally biased toward pro residues. Residues M1 to G42 are disordered. The interval E2–M170 is self-association. Residues D27–D40 are compositionally biased toward low complexity. Phosphoserine is present on residues S32 and S88. A coiled-coil region spans residues H84–R120. Positions K147 to Q276 are self-association and interaction with Hsp90. The interaction with Hsp70 stretch occupies residues K266–V335. The required for interaction with STIP1 stretch occupies residues S277 to V335.

This sequence belongs to the CDC37 family. Self-associates. Forms complexes with Hsp70 and Hsp90. Interacts with CDC37, FKBP4, PPID and STIP1.

It is found in the cytoplasm. Its function is as follows. Co-chaperone that binds to numerous proteins and promotes their interaction with Hsp70 and Hsp90. This is Hsp90 co-chaperone Cdc37-like 1 (Cdc37l1) from Rattus norvegicus (Rat).